The primary structure comprises 311 residues: Bifunctional pinoresinol-lariciresinol reductase (311 aa).

Residues 10–16 (GGTGYLG), Arg-35, and Lys-44 each bind NADP(+). The active-site Proton acceptor is Lys-138. Arg-142 provides a ligand contact to NADP(+). His-270 contributes to the substrate binding site.

The protein belongs to the NmrA-type oxidoreductase family. Isoflavone reductase subfamily. As to quaternary structure, dimer. In terms of tissue distribution, expressed in rhizomes, stems, and leaves.

It catalyses the reaction (-)-secoisolariciresinol + NADP(+) = (+)-lariciresinol + NADPH + H(+). It carries out the reaction (+)-lariciresinol + NADP(+) = (+)-pinoresinol + NADPH + H(+). It functions in the pathway aromatic compound metabolism; phenylpropanoid biosynthesis. Its function is as follows. Reductase involved in lignan biosynthesis. Also involved in the biosynthesis of etoposide, a chemotherapeutic compound of the topoisomerase inhibitor family. Catalyzes the enantioselective sequential conversion of (+)-pinoresinol into (+)-lariciresinol and of (+)-lariciresinol into (-)-secoisolariciresinol. Abstracts the 4R-hydride from the NADPH cofactor during catalysis. This is Bifunctional pinoresinol-lariciresinol reductase from Sinopodophyllum hexandrum (Himalayan may apple).